The following is a 686-amino-acid chain: Methionine--tRNA ligase (686 aa).

Residues proline 15–histidine 25 carry the 'HIGH' region motif. The Zn(2+) site is built by cysteine 146, cysteine 149, cysteine 159, and cysteine 162. Residues lysine 332–serine 336 carry the 'KMSKS' region motif. Lysine 335 serves as a coordination point for ATP. Residues alanine 550–glutamate 571 form a disordered region. The 102-residue stretch at alanine 585–methionine 686 folds into the tRNA-binding domain.

The protein belongs to the class-I aminoacyl-tRNA synthetase family. MetG type 1 subfamily. Homodimer. Zn(2+) is required as a cofactor.

The protein localises to the cytoplasm. The enzyme catalyses tRNA(Met) + L-methionine + ATP = L-methionyl-tRNA(Met) + AMP + diphosphate. Is required not only for elongation of protein synthesis but also for the initiation of all mRNA translation through initiator tRNA(fMet) aminoacylation. This is Methionine--tRNA ligase from Vibrio atlanticus (strain LGP32) (Vibrio splendidus (strain Mel32)).